The chain runs to 243 residues: 2,3-bisphosphoglycerate-dependent phosphoglycerate mutase (243 aa).

Substrate-binding positions include 8–15 (RHGQSEWN), 21–22 (TG), Arg-60, 87–90 (ERHY), Lys-98, 114–115 (RR), and 183–184 (GN). Residue His-9 is the Tele-phosphohistidine intermediate of the active site. The active-site Proton donor/acceptor is Glu-87.

Belongs to the phosphoglycerate mutase family. BPG-dependent PGAM subfamily.

It catalyses the reaction (2R)-2-phosphoglycerate = (2R)-3-phosphoglycerate. It participates in carbohydrate degradation; glycolysis; pyruvate from D-glyceraldehyde 3-phosphate: step 3/5. Catalyzes the interconversion of 2-phosphoglycerate and 3-phosphoglycerate. In Clostridium acetobutylicum (strain ATCC 824 / DSM 792 / JCM 1419 / IAM 19013 / LMG 5710 / NBRC 13948 / NRRL B-527 / VKM B-1787 / 2291 / W), this protein is 2,3-bisphosphoglycerate-dependent phosphoglycerate mutase.